A 506-amino-acid chain; its full sequence is Nondiscriminating glutamyl-tRNA synthetase EARS2, mitochondrial (506 aa).

The N-terminal 41 residues, 1–41 (MAALLRRLLQRGRPLAASGRRVGRREARLGTGPGVAVRVRF), are a transit peptide targeting the mitochondrion. 40 to 42 (RFA) is an L-glutamate binding site. Positions 45-53 (PTGFLHLGG) match the 'HIGH' region motif. H50 serves as a coordination point for ATP. Residues E76, 228 to 232 (YHLAC), and R246 each bind L-glutamate. E249 serves as a coordination point for ATP. The residue at position 256 (K256) is an N6-succinyllysine. ATP is bound at residue 284-288 (KLSKR). The 'KMSKS' region signature appears at 284 to 288 (KLSKR). K486 is subject to N6-acetyllysine.

It belongs to the class-I aminoacyl-tRNA synthetase family. Glutamate--tRNA ligase type 1 subfamily.

It is found in the mitochondrion matrix. The catalysed reaction is tRNA(Glx) + L-glutamate + ATP = L-glutamyl-tRNA(Glx) + AMP + diphosphate. The enzyme catalyses tRNA(Glu) + L-glutamate + ATP = L-glutamyl-tRNA(Glu) + AMP + diphosphate. It carries out the reaction tRNA(Gln) + L-glutamate + ATP = L-glutamyl-tRNA(Gln) + AMP + diphosphate. Functionally, non-discriminating glutamyl-tRNA synthetase that catalyzes aminoacylation of both mitochondrial tRNA(Glu) and tRNA(Gln) and participates in RNA aminoacylation for mitochondrial protein translation. Attachs glutamate to tRNA(Glu) or tRNA(Gln) in a two-step reaction: glutamate is first activated by ATP to form Glu-AMP and then transferred to the acceptor end of tRNA(Glu) or tRNA(Gln). In vitro, cytoplasmic tRNA(Gln) is slightly glutamylated, but with low activity. The chain is Nondiscriminating glutamyl-tRNA synthetase EARS2, mitochondrial from Macaca fascicularis (Crab-eating macaque).